Reading from the N-terminus, the 176-residue chain is Inorganic pyrophosphatase (176 aa).

Positions 30, 44, and 56 each coordinate substrate. 3 residues coordinate Mg(2+): Asp-66, Asp-71, and Asp-103. Tyr-142 provides a ligand contact to substrate.

The protein belongs to the PPase family. Homohexamer. Mg(2+) is required as a cofactor.

The protein localises to the cytoplasm. It carries out the reaction diphosphate + H2O = 2 phosphate + H(+). Functionally, catalyzes the hydrolysis of inorganic pyrophosphate (PPi) forming two phosphate ions. The sequence is that of Inorganic pyrophosphatase from Vibrio cholerae serotype O1 (strain ATCC 39315 / El Tor Inaba N16961).